We begin with the raw amino-acid sequence, 180 residues long: Probable chorismate pyruvate-lyase (180 aa).

Residues Arg-73, Leu-111, and Glu-170 each contribute to the substrate site.

The protein belongs to the UbiC family.

It is found in the cytoplasm. The enzyme catalyses chorismate = 4-hydroxybenzoate + pyruvate. Its pathway is cofactor biosynthesis; ubiquinone biosynthesis. Removes the pyruvyl group from chorismate, with concomitant aromatization of the ring, to provide 4-hydroxybenzoate (4HB) for the ubiquinone pathway. In Nitrosospira multiformis (strain ATCC 25196 / NCIMB 11849 / C 71), this protein is Probable chorismate pyruvate-lyase.